Reading from the N-terminus, the 261-residue chain is Large ribosomal subunit protein uL3 (261 aa).

Low complexity predominate over residues 138-148 (SVSHRSHGSTG). 2 disordered regions span residues 138 to 163 (SVSHRSHGSTGQRQDPGRTFPGKKMA) and 214 to 261 (ADAP…GDQA). An N5-methylglutamine modification is found at glutamine 151. Positions 227-261 (APTPVEAAADEAAPAEEPAVTEAPAAEATEAGDQA) are enriched in low complexity.

This sequence belongs to the universal ribosomal protein uL3 family. Part of the 50S ribosomal subunit. Forms a cluster with proteins L14 and L19. Methylated by PrmB.

One of the primary rRNA binding proteins, it binds directly near the 3'-end of the 23S rRNA, where it nucleates assembly of the 50S subunit. This Phenylobacterium zucineum (strain HLK1) protein is Large ribosomal subunit protein uL3.